Consider the following 596-residue polypeptide: DNA polymerase kappa (596 aa).

The 236-residue stretch at Cys-85 to Gly-320 folds into the UmuC domain. Asp-89 and Asp-180 together coordinate Mg(2+). Glu-181 is a catalytic residue. The UBZ4-type zinc finger occupies Thr-516–Gln-545. Cys-519, Cys-522, His-536, and Cys-540 together coordinate Zn(2+). Residues Asn-559–Lys-584 form a disordered region. Basic residues predominate over residues Thr-570–Lys-584.

It belongs to the DNA polymerase type-Y family. The cofactor is Mg(2+). Mn(2+) is required as a cofactor.

It is found in the nucleus. It catalyses the reaction DNA(n) + a 2'-deoxyribonucleoside 5'-triphosphate = DNA(n+1) + diphosphate. DNA polymerase specifically involved in DNA repair. Plays an important role in translesion synthesis, where the normal high-fidelity DNA polymerases cannot proceed and DNA synthesis stalls. Depending on the context, it inserts the correct base, but causes frequent base transitions, transversions and frameshifts. Lacks 3'-5' proofreading exonuclease activity. Forms a Schiff base with 5'-deoxyribose phosphate at abasic sites, but does not have lyase activity. The protein is DNA polymerase kappa (polk-1) of Caenorhabditis elegans.